An 827-amino-acid chain; its full sequence is MDSTDKNGESVSSVSSSRLQSRKPPNLSITIPPPEASAPGEQASMLPQRPRNPAYMKSVSLQEQRGRWQEGSSEKRPGFRRQASLSQSIRKGTAQWFGVSGDWEAKRQHWQRRSLHHCSVRYGRLKASCQRDLELPSQEVPSFQGTESPKPCKMPKIVDPLARGRAFRHPDEVDRPHAPHPPLTPGVLSLTSFTSVRSGHSHLPRRKRMSVAHMSFQAAAALLKGRSVLDATGQRCRVVKRSFAYPSFLEEDVVDGADTFDSSFFSKEEMSSMPDDVFESPPLSASYFRGIPRSASPVSPDGVQIPLKEYGRPPVAGTRRGKRIASKVKHFAFDRKKRHYGLGVVGNWLNRSYRRSISSTVQRQLESFDSHRPYFTYWLTFVHIIITLLVICTYGIAPVGFAQHVTTQLVLRNKGVYESVKYIQQENFWIGPSSIDLIHLGAKFSPCIRKDQQIEQLVLRERDLERDSGCCVQNDHSGCIQTQRKDCSETLATFVKWQDDTGPPMDKSDLGQKRTSGAVCHQDPRTCEEPASSGAHIWPDDITKWPICTEQAKSNRTGFLHMDCQIKGRPCCISTKGSCEITTREYCEFMHGYFHEEATLCSQVHCLDKVCGLLPFLNPEVPDQFYRLWLSLFLHAGVVHCLVSVVFQMTILRDLEKLAGWHRIAIIFILSGITGNLASAIFLPYRAEVGPAGSQFGLLACLFVELFQSWQLLERPWKAFLNLSAIVLFLFICGLLPWIDNIAHIFGFLSGLLLAFAFLPYITFGTSDKYRKRALILVSLLVFAGLFASLVIWLYVYPINWPWIEYLTCFPFTSRFCEKYELDQVLH.

The interval 1-87 (MDSTDKNGES…GFRRQASLSQ (87 aa)) is disordered. The Cytoplasmic segment spans residues 1-380 (MDSTDKNGES…HRPYFTYWLT (380 aa)). Phosphoserine is present on serine 60. Positions 64-77 (QRGRWQEGSSEKRP) are enriched in basic and acidic residues. Phosphoserine is present on residues serine 84, serine 88, serine 294, serine 296, and serine 299. Residues 381-401 (FVHIIITLLVICTYGIAPVGF) form a helical membrane-spanning segment. Residues 402–631 (AQHVTTQLVL…PDQFYRLWLS (230 aa)) lie on the Lumenal side of the membrane. Residues 632–652 (LFLHAGVVHCLVSVVFQMTIL) traverse the membrane as a helical segment. Over 653–663 (RDLEKLAGWHR) the chain is Cytoplasmic. The chain crosses the membrane as a helical span at residues 664 to 684 (IAIIFILSGITGNLASAIFLP). Over 685 to 686 (YR) the chain is Lumenal. Residues 687–707 (AEVGPAGSQFGLLACLFVELF) form a helical membrane-spanning segment. Residues 708–718 (QSWQLLERPWK) lie on the Cytoplasmic side of the membrane. A helical membrane pass occupies residues 719–739 (AFLNLSAIVLFLFICGLLPWI). Residues 740–744 (DNIAH) are Lumenal-facing. Residues 745 to 765 (IFGFLSGLLLAFAFLPYITFG) traverse the membrane as a helical segment. At 766-773 (TSDKYRKR) the chain is on the cytoplasmic side. The chain crosses the membrane as a helical span at residues 774 to 794 (ALILVSLLVFAGLFASLVIWL). The Lumenal portion of the chain corresponds to 795-827 (YVYPINWPWIEYLTCFPFTSRFCEKYELDQVLH).

Belongs to the peptidase S54 family. In terms of assembly, interacts with EGF. Interacts (via cytoplasmic N-terminus) with FRMD8/iTAP; this interaction leads to mutual protein stabilization. Interacts with ADAM17/TACE. In terms of tissue distribution, detected in retina and spleen.

The protein localises to the endoplasmic reticulum membrane. It localises to the cell membrane. Functionally, regulates ADAM17 protease, a sheddase of the epidermal growth factor (EGF) receptor ligands and TNF, thereby plays a role in sleep, cell survival, proliferation, migration and inflammation. Does not exhibit any protease activity on its own. This is Inactive rhomboid protein 2 (RHBDF2) from Canis lupus familiaris (Dog).